A 642-amino-acid chain; its full sequence is Threonine--tRNA ligase (642 aa).

The 61-residue stretch at 1-61 (MPVITLPDGS…DTDAQLAIIT (61 aa)) folds into the TGS domain. The tract at residues 243–534 (DHRKIGKQLD…LTEEFAGFFP (292 aa)) is catalytic. Residues C334, H385, and H511 each coordinate Zn(2+).

It belongs to the class-II aminoacyl-tRNA synthetase family. In terms of assembly, homodimer. The cofactor is Zn(2+).

It is found in the cytoplasm. The catalysed reaction is tRNA(Thr) + L-threonine + ATP = L-threonyl-tRNA(Thr) + AMP + diphosphate + H(+). Its function is as follows. Catalyzes the attachment of threonine to tRNA(Thr) in a two-step reaction: L-threonine is first activated by ATP to form Thr-AMP and then transferred to the acceptor end of tRNA(Thr). Also edits incorrectly charged L-seryl-tRNA(Thr). In Pectobacterium atrosepticum (strain SCRI 1043 / ATCC BAA-672) (Erwinia carotovora subsp. atroseptica), this protein is Threonine--tRNA ligase.